Here is a 183-residue protein sequence, read N- to C-terminus: Calmodulin-like protein 3 (183 aa).

EF-hand domains lie at 7–42 (EQIAEFREAFNLFDKDGDGTITSKELGTVMGSLGQS), 43–78 (PTEAELKKMVEEVDADGSGSIEFEEFLGLLARKLRD), 80–115 (GAEDDIRDAFRVFDKDQNGFITPDELRHVMANLSDP), and 116–151 (LSDDELADMLHEADSDGDGQINYNEFLKVMMAKRRQ). Residues aspartate 20, aspartate 22, aspartate 24, threonine 26, glutamate 31, aspartate 56, aspartate 58, serine 60, serine 62, glutamate 67, aspartate 93, aspartate 95, asparagine 97, glutamate 104, aspartate 129, aspartate 131, aspartate 133, glutamine 135, and glutamate 140 each coordinate Ca(2+). The segment at 154-183 (MEGHGSGGHRSSNSHKKSGCCGPNSSCTIL) is disordered. 2 S-palmitoyl cysteine lipidation sites follow: cysteine 173 and cysteine 174. Cysteine 180 bears the Cysteine methyl ester mark. The S-farnesyl cysteine moiety is linked to residue cysteine 180. A propeptide spans 181-183 (TIL) (removed in mature form).

This sequence belongs to the calmodulin family.

It localises to the membrane. Its function is as follows. Potential calcium sensor. In Oryza sativa subsp. japonica (Rice), this protein is Calmodulin-like protein 3 (CML3).